A 98-amino-acid polypeptide reads, in one-letter code: NADH-ubiquinone oxidoreductase chain 4L (98 aa).

3 helical membrane-spanning segments follow: residues 1–21 (MSIVYINIFLAFIMSLLGMLI), 29–49 (SLLCLEGMMLSLFVMITLIIL), and 61–81 (IILLVFAACEAALGLSLLVMV).

This sequence belongs to the complex I subunit 4L family. In terms of assembly, core subunit of respiratory chain NADH dehydrogenase (Complex I) which is composed of 45 different subunits.

The protein localises to the mitochondrion inner membrane. The catalysed reaction is a ubiquinone + NADH + 5 H(+)(in) = a ubiquinol + NAD(+) + 4 H(+)(out). In terms of biological role, core subunit of the mitochondrial membrane respiratory chain NADH dehydrogenase (Complex I) which catalyzes electron transfer from NADH through the respiratory chain, using ubiquinone as an electron acceptor. Part of the enzyme membrane arm which is embedded in the lipid bilayer and involved in proton translocation. This Herpestes javanicus (Small Indian mongoose) protein is NADH-ubiquinone oxidoreductase chain 4L (MT-ND4L).